Here is a 334-residue protein sequence, read N- to C-terminus: MTSIKNNNENKHIVVYRKIHQSLIEKLENQGYKVTQFEPINSNNIQEFYEAIKTANGLIGSVFKIDENVLSKAPFLECVSAISVGYDNYDLVVLNDRKIPLMHTPNVLNDSMADIMMGLMITVARKLAYCDKRMRNGEWNGPLDKSWFGLEVHHKKVGIIGMGRIGEVLAKRCRMGFDMEVAYYSRSRHLKVEELYDAKHQDLDTILSTSDFICVVLPGSQETKHFFSFGQFSKMKNSAIFINAGRGMTVDEVALIDALETGKIAGAGLDVFEKEPLNKDSKLLTLDNIVLLPHIGTSTIETQHIMSECAVNNLISALNGNLEKNCVNASIIKK.

Residues 164–165, 244–246, and aspartate 270 contribute to the NAD(+) site; these read RI and AGR. Residue arginine 246 is part of the active site. Residue glutamate 275 is part of the active site. The active-site Proton donor is histidine 294. 294 to 297 contributes to the NAD(+) binding site; that stretch reads HIGT.

It belongs to the D-isomer specific 2-hydroxyacid dehydrogenase family.

It localises to the cytoplasm. It carries out the reaction D-gluconate + NADP(+) = 2-dehydro-D-gluconate + NADPH + H(+). Catalyzes the NADPH-dependent reduction of 2,5-diketo-D-gluconate (25DKG) to 5-keto-D-gluconate (5KDG), 2-keto-D-gluconate (2KDG) to D-gluconate, and 2-keto-L-gulonate (2KLG) to L-idonate (IA). This Dictyostelium discoideum (Social amoeba) protein is Probable 2-ketogluconate reductase (tkrA).